Consider the following 332-residue polypeptide: Nuclear hormone receptor family member nhr-9 (332 aa).

Residues 11–85 (ERRCAICSKL…MGMRIVTNQY (75 aa)) constitute a DNA-binding region (nuclear receptor). 2 consecutive NR C4-type zinc fingers follow at residues 14 to 34 (CAIC…CNAC) and 50 to 73 (CINN…YNKC). The region spanning 101-332 (DRSNKLMNFQ…KRLCAELLGA (232 aa)) is the NR LBD domain.

It belongs to the nuclear hormone receptor family.

It is found in the nucleus. Orphan nuclear receptor. The chain is Nuclear hormone receptor family member nhr-9 (nhr-9) from Caenorhabditis elegans.